We begin with the raw amino-acid sequence, 223 residues long: Adenylate kinase (223 aa).

ATP is bound at residue 10 to 15; sequence GSGKGT. The NMP stretch occupies residues 30–59; sequence ESGAIFREHIGGGTELGKQAKAFIERGDLV. AMP is bound by residues serine 31, arginine 36, 57 to 59, 84 to 87, and glutamine 91; these read DLV and GFPR. Residues 125–164 form an LID region; the sequence is GRRLCKNDNNHPNNIFIDAIKPNGDVCRVCGGELSARSDD. Arginine 126 is an ATP binding site. AMP-binding residues include arginine 161 and arginine 173. Glycine 209 serves as a coordination point for ATP.

This sequence belongs to the adenylate kinase family. As to quaternary structure, monomer.

Its subcellular location is the cytoplasm. It carries out the reaction AMP + ATP = 2 ADP. It participates in purine metabolism; AMP biosynthesis via salvage pathway; AMP from ADP: step 1/1. In terms of biological role, catalyzes the reversible transfer of the terminal phosphate group between ATP and AMP. Plays an important role in cellular energy homeostasis and in adenine nucleotide metabolism. This is Adenylate kinase from Nitratidesulfovibrio vulgaris (strain ATCC 29579 / DSM 644 / CCUG 34227 / NCIMB 8303 / VKM B-1760 / Hildenborough) (Desulfovibrio vulgaris).